A 415-amino-acid polypeptide reads, in one-letter code: Serine hydroxymethyltransferase (415 aa).

Residues Leu-117 and Gly-121–Leu-123 each bind (6S)-5,6,7,8-tetrahydrofolate. The residue at position 226 (Lys-226) is an N6-(pyridoxal phosphate)lysine.

It belongs to the SHMT family. In terms of assembly, homodimer. The cofactor is pyridoxal 5'-phosphate.

It is found in the cytoplasm. The catalysed reaction is (6R)-5,10-methylene-5,6,7,8-tetrahydrofolate + glycine + H2O = (6S)-5,6,7,8-tetrahydrofolate + L-serine. The protein operates within one-carbon metabolism; tetrahydrofolate interconversion. Its pathway is amino-acid biosynthesis; glycine biosynthesis; glycine from L-serine: step 1/1. In terms of biological role, catalyzes the reversible interconversion of serine and glycine with tetrahydrofolate (THF) serving as the one-carbon carrier. This reaction serves as the major source of one-carbon groups required for the biosynthesis of purines, thymidylate, methionine, and other important biomolecules. Also exhibits THF-independent aldolase activity toward beta-hydroxyamino acids, producing glycine and aldehydes, via a retro-aldol mechanism. The chain is Serine hydroxymethyltransferase from Dehalococcoides mccartyi (strain CBDB1).